The sequence spans 136 residues: Large ribosomal subunit protein bL21 (136 aa).

Residues M1–S21 are compositionally biased toward low complexity. Positions M1–G25 are disordered.

The protein belongs to the bacterial ribosomal protein bL21 family. In terms of assembly, part of the 50S ribosomal subunit. Contacts protein L20.

In terms of biological role, this protein binds to 23S rRNA in the presence of protein L20. The polypeptide is Large ribosomal subunit protein bL21 (Synechococcus sp. (strain RCC307)).